Consider the following 498-residue polypeptide: Glycerol kinase (498 aa).

Residue T12 participates in ADP binding. ATP contacts are provided by T12, T13, and S14. Residue T12 coordinates sn-glycerol 3-phosphate. R16 provides a ligand contact to ADP. Residues R82, E83, Y134, and D243 each contribute to the sn-glycerol 3-phosphate site. The glycerol site is built by R82, E83, Y134, D243, and Q244. ADP contacts are provided by T265 and G308. ATP-binding residues include T265, G308, Q312, and G409. ADP-binding residues include G409 and N413.

It belongs to the FGGY kinase family. Homotetramer and homodimer (in equilibrium).

The catalysed reaction is glycerol + ATP = sn-glycerol 3-phosphate + ADP + H(+). The protein operates within polyol metabolism; glycerol degradation via glycerol kinase pathway; sn-glycerol 3-phosphate from glycerol: step 1/1. With respect to regulation, activated by phosphorylation and inhibited by fructose 1,6-bisphosphate (FBP). In terms of biological role, key enzyme in the regulation of glycerol uptake and metabolism. Catalyzes the phosphorylation of glycerol to yield sn-glycerol 3-phosphate. This Agathobacter rectalis (strain ATCC 33656 / DSM 3377 / JCM 17463 / KCTC 5835 / VPI 0990) (Eubacterium rectale) protein is Glycerol kinase.